Consider the following 147-residue polypeptide: D-aminoacyl-tRNA deacylase (147 aa).

The Gly-cisPro motif, important for rejection of L-amino acids signature appears at 138–139; it reads GP.

It belongs to the DTD family. In terms of assembly, homodimer.

It is found in the cytoplasm. The catalysed reaction is glycyl-tRNA(Ala) + H2O = tRNA(Ala) + glycine + H(+). It catalyses the reaction a D-aminoacyl-tRNA + H2O = a tRNA + a D-alpha-amino acid + H(+). Its function is as follows. An aminoacyl-tRNA editing enzyme that deacylates mischarged D-aminoacyl-tRNAs. Also deacylates mischarged glycyl-tRNA(Ala), protecting cells against glycine mischarging by AlaRS. Acts via tRNA-based rather than protein-based catalysis; rejects L-amino acids rather than detecting D-amino acids in the active site. By recycling D-aminoacyl-tRNA to D-amino acids and free tRNA molecules, this enzyme counteracts the toxicity associated with the formation of D-aminoacyl-tRNA entities in vivo and helps enforce protein L-homochirality. This Prosthecochloris aestuarii (strain DSM 271 / SK 413) protein is D-aminoacyl-tRNA deacylase.